A 208-amino-acid chain; its full sequence is Uracil phosphoribosyltransferase (208 aa).

Residues arginine 78, arginine 103, and 130–138 (DPMLATGGS) each bind 5-phospho-alpha-D-ribose 1-diphosphate. Residues isoleucine 193 and 198-200 (GDA) contribute to the uracil site. Aspartate 199 provides a ligand contact to 5-phospho-alpha-D-ribose 1-diphosphate.

It belongs to the UPRTase family. Mg(2+) is required as a cofactor.

It carries out the reaction UMP + diphosphate = 5-phospho-alpha-D-ribose 1-diphosphate + uracil. Its pathway is pyrimidine metabolism; UMP biosynthesis via salvage pathway; UMP from uracil: step 1/1. With respect to regulation, allosterically activated by GTP. Its function is as follows. Catalyzes the conversion of uracil and 5-phospho-alpha-D-ribose 1-diphosphate (PRPP) to UMP and diphosphate. The polypeptide is Uracil phosphoribosyltransferase (Shewanella putrefaciens (strain CN-32 / ATCC BAA-453)).